Here is an 875-residue protein sequence, read N- to C-terminus: Probable inorganic carbon transporter subunit DabA (875 aa).

Residues Cys380, Asp382, His563, and Cys578 each contribute to the Zn(2+) site.

This sequence belongs to the inorganic carbon transporter (TC 9.A.2) DabA family. As to quaternary structure, forms a complex with DabB. It depends on Zn(2+) as a cofactor.

The protein localises to the cell membrane. Its function is as follows. Part of an energy-coupled inorganic carbon pump. This is Probable inorganic carbon transporter subunit DabA from Geobacillus thermodenitrificans (strain NG80-2).